The chain runs to 98 residues: Large ribosomal subunit protein uL23 (98 aa).

Belongs to the universal ribosomal protein uL23 family. In terms of assembly, part of the 50S ribosomal subunit. Contacts protein L29, and trigger factor when it is bound to the ribosome.

In terms of biological role, one of the early assembly proteins it binds 23S rRNA. One of the proteins that surrounds the polypeptide exit tunnel on the outside of the ribosome. Forms the main docking site for trigger factor binding to the ribosome. This chain is Large ribosomal subunit protein uL23, found in Cereibacter sphaeroides (strain ATCC 17025 / ATH 2.4.3) (Rhodobacter sphaeroides).